Here is a 231-residue protein sequence, read N- to C-terminus: Phosphatidylserine decarboxylase proenzyme (231 aa).

Ser188 serves as the catalytic Schiff-base intermediate with substrate; via pyruvic acid. A Pyruvic acid (Ser); by autocatalysis modification is found at Ser188.

Belongs to the phosphatidylserine decarboxylase family. PSD-A subfamily. Heterodimer of a large membrane-associated beta subunit and a small pyruvoyl-containing alpha subunit. The cofactor is pyruvate. Is synthesized initially as an inactive proenzyme. Formation of the active enzyme involves a self-maturation process in which the active site pyruvoyl group is generated from an internal serine residue via an autocatalytic post-translational modification. Two non-identical subunits are generated from the proenzyme in this reaction, and the pyruvate is formed at the N-terminus of the alpha chain, which is derived from the carboxyl end of the proenzyme. The post-translation cleavage follows an unusual pathway, termed non-hydrolytic serinolysis, in which the side chain hydroxyl group of the serine supplies its oxygen atom to form the C-terminus of the beta chain, while the remainder of the serine residue undergoes an oxidative deamination to produce ammonia and the pyruvoyl prosthetic group on the alpha chain.

Its subcellular location is the cell membrane. It catalyses the reaction a 1,2-diacyl-sn-glycero-3-phospho-L-serine + H(+) = a 1,2-diacyl-sn-glycero-3-phosphoethanolamine + CO2. The protein operates within phospholipid metabolism; phosphatidylethanolamine biosynthesis; phosphatidylethanolamine from CDP-diacylglycerol: step 2/2. Functionally, catalyzes the formation of phosphatidylethanolamine (PtdEtn) from phosphatidylserine (PtdSer). This chain is Phosphatidylserine decarboxylase proenzyme, found in Rickettsia felis (strain ATCC VR-1525 / URRWXCal2) (Rickettsia azadi).